The sequence spans 361 residues: Glycerophosphodiester phosphodiesterase GDPD1, chloroplastic (361 aa).

The transit peptide at 1-53 (MSLKAIHVSEVPSLDHFPENPSLICSSRKANNKFVVVGHRGHGMNMSQSPDLR) directs the protein to the chloroplast. In terms of domain architecture, GP-PDE spans 54-323 (FSALKENSIL…DHVEEITEAV (270 aa)).

This sequence belongs to the glycerophosphoryl diester phosphodiesterase family. Mg(2+) serves as cofactor. As to expression, expressed in roots, shoots, rosette leaves, stems, flowers and siliques.

The protein localises to the plastid. The protein resides in the chloroplast. The enzyme catalyses a sn-glycero-3-phosphodiester + H2O = an alcohol + sn-glycerol 3-phosphate + H(+). Its function is as follows. Hydrolyzes glycerolphosphoglycerol, glycerophosphocholine and glycerophosphoethanolamine in vitro. May be involved in release of inorganic phosphate (Pi) from phospholipids during Pi starvation. The polypeptide is Glycerophosphodiester phosphodiesterase GDPD1, chloroplastic (Arabidopsis thaliana (Mouse-ear cress)).